We begin with the raw amino-acid sequence, 333 residues long: Mevalonate kinase (333 aa).

An ATP-binding site is contributed by 109-119 (PVGAGLGSSAA). Catalysis depends on D160, which acts as the Proton acceptor.

This sequence belongs to the GHMP kinase family. Mevalonate kinase subfamily. As to quaternary structure, homodimer. Mg(2+) serves as cofactor.

Its subcellular location is the cytoplasm. It carries out the reaction (R)-mevalonate + ATP = (R)-5-phosphomevalonate + ADP + H(+). The protein operates within isoprenoid biosynthesis; isopentenyl diphosphate biosynthesis via mevalonate pathway; isopentenyl diphosphate from (R)-mevalonate: step 1/3. Functionally, catalyzes the phosphorylation of (R)-mevalonate (MVA) to (R)-mevalonate 5-phosphate (MVAP). Functions in the mevalonate (MVA) pathway leading to isopentenyl diphosphate (IPP), a key precursor for the biosynthesis of isoprenoid compounds such as archaeal membrane lipids. The polypeptide is Mevalonate kinase (Thermococcus sibiricus (strain DSM 12597 / MM 739)).